The following is a 258-amino-acid chain: Spindlin-3 (258 aa).

Residues 1 to 23 (MKTPFGKAAAGQRSRTGAGHGSV) form a disordered region. Tudor-like domain stretches follow at residues 50-99 (VGCR…LELH), 129-178 (VGKA…YQLL), and 210-255 (VGKQ…YDLV). 2 histone H3K4me3 and H3R8me2a binding regions span residues E138 and 246–248 (DFH).

It belongs to the SPIN/STSY family. Interacts with C11orf84/SPINDOC.

In terms of biological role, exhibits H3K4me3-binding activity. This Pongo abelii (Sumatran orangutan) protein is Spindlin-3 (SPIN3).